Reading from the N-terminus, the 510-residue chain is Putative cytochrome P450 cyp-13B1 (510 aa).

Position 456 (Cys-456) interacts with heme.

Belongs to the cytochrome P450 family. The cofactor is heme.

Functionally, cytochromes P450 are a group of heme-thiolate monooxygenases. They oxidize a variety of structurally unrelated compounds, including steroids, fatty acids, and xenobiotics. May play a role in the regulation of lifespan. This Caenorhabditis elegans protein is Putative cytochrome P450 cyp-13B1.